We begin with the raw amino-acid sequence, 287 residues long: Nucleotide-binding protein mma_3120 (287 aa).

8–15 (GISGSGKS) serves as a coordination point for ATP. 57–60 (DARS) is a binding site for GTP.

It belongs to the RapZ-like family.

Functionally, displays ATPase and GTPase activities. This Janthinobacterium sp. (strain Marseille) (Minibacterium massiliensis) protein is Nucleotide-binding protein mma_3120.